Here is a 210-residue protein sequence, read N- to C-terminus: ATP-dependent Clp protease proteolytic subunit (210 aa).

Ser107 serves as the catalytic Nucleophile. His132 is a catalytic residue.

The protein belongs to the peptidase S14 family. As to quaternary structure, fourteen ClpP subunits assemble into 2 heptameric rings which stack back to back to give a disk-like structure with a central cavity, resembling the structure of eukaryotic proteasomes.

The protein resides in the cytoplasm. The enzyme catalyses Hydrolysis of proteins to small peptides in the presence of ATP and magnesium. alpha-casein is the usual test substrate. In the absence of ATP, only oligopeptides shorter than five residues are hydrolyzed (such as succinyl-Leu-Tyr-|-NHMec, and Leu-Tyr-Leu-|-Tyr-Trp, in which cleavage of the -Tyr-|-Leu- and -Tyr-|-Trp bonds also occurs).. Functionally, cleaves peptides in various proteins in a process that requires ATP hydrolysis. Has a chymotrypsin-like activity. Plays a major role in the degradation of misfolded proteins. This is ATP-dependent Clp protease proteolytic subunit from Cereibacter sphaeroides (strain ATCC 17025 / ATH 2.4.3) (Rhodobacter sphaeroides).